Reading from the N-terminus, the 194-residue chain is 23 kDa U4/U6.U5 small nuclear ribonucleoprotein component (194 aa).

Residues 80–104 form a C2H2-type zinc finger; it reads FYCDICNLTFKDTLQYIDHLNHKVH.

As to quaternary structure, component of the U4/U6-U5 tri-snRNP complex composed of the U4, U6 and U5 snRNAs and at least PRP3, PRP4, PRP6, PRP8, PRP18, PRP31, PRP38, SNU13, SNU23, SNU66, SNU114, SPP381, SMB1, SMD1, SMD2, SMD3, SMX2, SMX3, LSM2, LSM3, LSM4, LSM5, LSM6, LSM7, LSM8, BRR2 and DIB1.

The protein resides in the nucleus. Participates in pre-mRNA splicing. Part of the U4/U5/U6 tri-snRNP complex, one of the building blocks of the spliceosome. The sequence is that of 23 kDa U4/U6.U5 small nuclear ribonucleoprotein component (SNU23) from Saccharomyces cerevisiae (strain ATCC 204508 / S288c) (Baker's yeast).